The chain runs to 250 residues: 1-(5-phosphoribosyl)-5-[(5-phosphoribosylamino)methylideneamino] imidazole-4-carboxamide isomerase (250 aa).

The active-site Proton acceptor is Asp12. Asp134 acts as the Proton donor in catalysis.

The protein belongs to the HisA/HisF family.

It localises to the cytoplasm. It catalyses the reaction 1-(5-phospho-beta-D-ribosyl)-5-[(5-phospho-beta-D-ribosylamino)methylideneamino]imidazole-4-carboxamide = 5-[(5-phospho-1-deoxy-D-ribulos-1-ylimino)methylamino]-1-(5-phospho-beta-D-ribosyl)imidazole-4-carboxamide. It participates in amino-acid biosynthesis; L-histidine biosynthesis; L-histidine from 5-phospho-alpha-D-ribose 1-diphosphate: step 4/9. This chain is 1-(5-phosphoribosyl)-5-[(5-phosphoribosylamino)methylideneamino] imidazole-4-carboxamide isomerase, found in Actinobacillus pleuropneumoniae serotype 3 (strain JL03).